The sequence spans 359 residues: 5-amino-6-(D-ribitylamino)uracil--L-tyrosine 4-hydroxyphenyl transferase (359 aa).

The 238-residue stretch at 45–282 (VTYVVNANIN…TYAVSRIFFK (238 aa)) folds into the Radical SAM core domain. Residues C59, C63, and C66 each coordinate [4Fe-4S] cluster.

It belongs to the radical SAM superfamily. CofH family. In terms of assembly, consists of two subunits, CofG and CofH. [4Fe-4S] cluster is required as a cofactor.

It carries out the reaction 5-amino-6-(D-ribitylamino)uracil + L-tyrosine + S-adenosyl-L-methionine = 5-amino-5-(4-hydroxybenzyl)-6-(D-ribitylimino)-5,6-dihydrouracil + 2-iminoacetate + 5'-deoxyadenosine + L-methionine + H(+). The protein operates within cofactor biosynthesis; coenzyme F0 biosynthesis. Functionally, catalyzes the radical-mediated synthesis of 5-amino-5-(4-hydroxybenzyl)-6-(D-ribitylimino)-5,6-dihydrouracil from 5-amino-6-(D-ribitylamino)uracil and L-tyrosine. This Methanococcus maripaludis (strain C6 / ATCC BAA-1332) protein is 5-amino-6-(D-ribitylamino)uracil--L-tyrosine 4-hydroxyphenyl transferase.